Consider the following 529-residue polypeptide: Bifunctional purine biosynthesis protein PurH (529 aa).

The MGS-like domain occupies 1-148 (MQQRRPIRRA…KNHKDVAIVV (148 aa)).

This sequence belongs to the PurH family.

It carries out the reaction (6R)-10-formyltetrahydrofolate + 5-amino-1-(5-phospho-beta-D-ribosyl)imidazole-4-carboxamide = 5-formamido-1-(5-phospho-D-ribosyl)imidazole-4-carboxamide + (6S)-5,6,7,8-tetrahydrofolate. The enzyme catalyses IMP + H2O = 5-formamido-1-(5-phospho-D-ribosyl)imidazole-4-carboxamide. Its pathway is purine metabolism; IMP biosynthesis via de novo pathway; 5-formamido-1-(5-phospho-D-ribosyl)imidazole-4-carboxamide from 5-amino-1-(5-phospho-D-ribosyl)imidazole-4-carboxamide (10-formyl THF route): step 1/1. It participates in purine metabolism; IMP biosynthesis via de novo pathway; IMP from 5-formamido-1-(5-phospho-D-ribosyl)imidazole-4-carboxamide: step 1/1. This Yersinia enterocolitica serotype O:8 / biotype 1B (strain NCTC 13174 / 8081) protein is Bifunctional purine biosynthesis protein PurH.